Reading from the N-terminus, the 265-residue chain is Ribosomal RNA small subunit methyltransferase A (265 aa).

His-13, Leu-15, Gly-40, Glu-62, Asp-87, and Asn-106 together coordinate S-adenosyl-L-methionine.

It belongs to the class I-like SAM-binding methyltransferase superfamily. rRNA adenine N(6)-methyltransferase family. RsmA subfamily.

It localises to the cytoplasm. The enzyme catalyses adenosine(1518)/adenosine(1519) in 16S rRNA + 4 S-adenosyl-L-methionine = N(6)-dimethyladenosine(1518)/N(6)-dimethyladenosine(1519) in 16S rRNA + 4 S-adenosyl-L-homocysteine + 4 H(+). Functionally, specifically dimethylates two adjacent adenosines (A1518 and A1519) in the loop of a conserved hairpin near the 3'-end of 16S rRNA in the 30S particle. May play a critical role in biogenesis of 30S subunits. The sequence is that of Ribosomal RNA small subunit methyltransferase A from Persephonella marina (strain DSM 14350 / EX-H1).